Here is a 104-residue protein sequence, read N- to C-terminus: Phosphoribosyl-ATP pyrophosphatase (104 aa).

It belongs to the PRA-PH family.

It is found in the cytoplasm. It carries out the reaction 1-(5-phospho-beta-D-ribosyl)-ATP + H2O = 1-(5-phospho-beta-D-ribosyl)-5'-AMP + diphosphate + H(+). Its pathway is amino-acid biosynthesis; L-histidine biosynthesis; L-histidine from 5-phospho-alpha-D-ribose 1-diphosphate: step 2/9. This chain is Phosphoribosyl-ATP pyrophosphatase, found in Streptococcus sanguinis (strain SK36).